Here is a 439-residue protein sequence, read N- to C-terminus: Protein PHYTOCHROME KINASE SUBSTRATE 1 (439 aa).

The span at 1–14 (MVTLTPSSASTPKT) shows a compositional bias: polar residues. Disordered regions lie at residues 1–22 (MVTL…MKNN), 54–80 (KTLN…APED), and 100–139 (QGSS…SSWN). A compositionally biased stretch (basic and acidic residues) spans 63–79 (KQEEFGDEKKMVKKAPE). Composition is skewed to polar residues over residues 100 to 109 (QGSSVLSLTN) and 118 to 139 (DSKQ…SSWN). Phosphoserine is present on residues Ser238 and Ser244. Disordered regions lie at residues 259–311 (LPLP…PTCY) and 355–439 (TAKS…LYSQ). A compositionally biased stretch (basic and acidic residues) spans 412–421 (TKPKSFETRR). Positions 424 to 439 (SNSSISHTQSSLLYSQ) are enriched in low complexity.

It belongs to the PKS family. As to quaternary structure, interacts with PKS2, RPT3, PHOT1, PHOT2 and the C-termini of both phytochromes A (phyA) and B (phyB). Binds both spectral forms of phytochrome, Pr and Pfr. Post-translationally, phosphorylated on Ser and to a lower extent on Thr by phytochromes. Phosphorylation is stimulated twofold by red light. As to expression, expressed in young seedlings in both darkness and light. Moderate in leaves and very low in roots and flowers. Expressed in the elongation zone of the root and hypocotyl.

It is found in the cell membrane. In terms of biological role, may be responsible for light-regulated cytoplasmic sequestration of phytochromes or may be a negative regulator of phytochrome B signaling. Component of the network that modulates the very low-fluence response (VLFR) branch of phyA signaling. Acts positively in PHOT1 signaling. Regulates phytochrome-mediated photomorphogenesis and hypocotyl phototropism. Involved in the control of leaf flattening and leaf positioning. Promotes negative root phototropism and negatively regulates root gravitropism. May act by controlling auxin homeostasis. The polypeptide is Protein PHYTOCHROME KINASE SUBSTRATE 1 (PKS1) (Arabidopsis thaliana (Mouse-ear cress)).